Reading from the N-terminus, the 2804-residue chain is Nipped-B-like protein (2804 aa).

2 stretches are compositionally biased toward polar residues: residues 128 to 173 (LSQN…QNSP) and 191 to 208 (HPSS…SVSS). The interval 128 to 340 (LSQNSMHSSP…LGKDEKEQSE (213 aa)) is disordered. 2 positions are modified to phosphoserine: serine 150 and serine 162. Basic and acidic residues predominate over residues 234-249 (HHADNPRHGSSEDYLH). Residues serine 243, serine 256, serine 274, serine 280, serine 284, serine 301, serine 306, and serine 318 each carry the phosphoserine modification. Residues 331 to 340 (LGKDEKEQSE) are compositionally biased toward basic and acidic residues. Residue serine 350 is modified to Phosphoserine. Basic and acidic residues predominate over residues 482–500 (RESAIERERFSKEVQDKDK). Residues 482–946 (RESAIERERF…NKAEFPSYLL (465 aa)) are disordered. A compositionally biased stretch (polar residues) spans 523 to 534 (PASQETGSTGNG). Composition is skewed to basic and acidic residues over residues 562-572 (DSIKKPEEIKQ), 593-663 (PENH…ECKQ), 672-685 (KQNE…KPND), and 694-939 (ETTK…DNKA). Phosphothreonine is present on residues threonine 713 and threonine 746. The residue at position 912 (serine 912) is a Phosphoserine. The short motif at 996–1009 (NKGAKPVVVLQKLS) is the PxVxL motif element. Disordered stretches follow at residues 1017 to 1047 (IKDR…DQSV) and 1060 to 1191 (ESTM…LTPE). Lysine 1082 carries the post-translational modification N6-acetyllysine. 3 positions are modified to phosphoserine: serine 1089, serine 1090, and serine 1096. The segment covering 1089 to 1100 (SSDEDNDSDEAF) has biased composition (acidic residues). Over residues 1109–1139 (KDDDKAWEYEERDRRSSGDHRRSGHSHEGRR) the composition is skewed to basic and acidic residues. 3 positions are modified to phosphoserine: serine 1150, serine 1152, and serine 1154. Tyrosine 1159 bears the Phosphotyrosine mark. Serine 1160 is subject to Phosphoserine. The span at 1171-1182 (KMKKKEKQKKRK) shows a compositional bias: basic residues. At threonine 1189 the chain carries Phosphothreonine. Position 1197 is a phosphoserine (serine 1197). Positions 1691-1710 (AMKSQKDEESSEGTHHAKEI) are disordered. HEAT repeat units follow at residues 1767-1805 (AQSF…VDPS), 1843-1881 (PQLA…EQPT), 1945-1984 (YDWF…HILK), 2227-2267 (VNLK…LKEM), and 2313-2351 (LIHP…KYAG). A compositionally biased stretch (basic and acidic residues) spans 2473–2489 (VKDKRKERKSSPSKENE). Disordered regions lie at residues 2473 to 2520 (VKDK…DDIN) and 2651 to 2696 (TSLL…DSTE). Phosphoserine is present on residues serine 2493, serine 2509, serine 2511, serine 2513, serine 2515, serine 2652, and serine 2658. A compositionally biased stretch (acidic residues) spans 2510–2519 (DSDSDSEDDI). Threonine 2667 carries the post-translational modification Phosphothreonine. A Phosphoserine modification is found at serine 2672.

Belongs to the SCC2/Nipped-B family. In terms of assembly, heterodimerizes with MAU2/SCC4 to form the cohesin loading complex. The NIPBL-MAU2 heterodimer interacts with the cohesin complex composed of SMC1A/B and SMC3 heterodimer, RAD21 and STAG1/SA1. NIPBL directly contacts all members of the complex, RAD21, SMC1A/B, SMC3 and STAG1. Interacts directly (via PxVxL motif) with CBX5. Interacts with ZNF609 (via N-terminus). Interacts with the multiprotein complex Integrator. Interacts (via PxVxL motif) with CBX3. Interacts with BRD4. As to expression, widely expressed. Highly expressed in heart, skeletal muscle, fetal and adult liver, fetal and adult kidney. Expressed at intermediates level in thymus, placenta, peripheral leukocyte and small intestine. Weakly or not expressed in brain, colon, spleen and lung.

The protein localises to the nucleus. It is found in the chromosome. Its function is as follows. Plays an important role in the loading of the cohesin complex on to DNA. Forms a heterodimeric complex (also known as cohesin loading complex) with MAU2/SCC4 which mediates the loading of the cohesin complex onto chromatin. Plays a role in cohesin loading at sites of DNA damage. Its recruitment to double-strand breaks (DSBs) sites occurs in a CBX3-, RNF8- and RNF168-dependent manner whereas its recruitment to UV irradiation-induced DNA damage sites occurs in a ATM-, ATR-, RNF8- and RNF168-dependent manner. Along with ZNF609, promotes cortical neuron migration during brain development by regulating the transcription of crucial genes in this process. Preferentially binds promoters containing paused RNA polymerase II. Up-regulates the expression of SEMA3A, NRP1, PLXND1 and GABBR2 genes, among others. The sequence is that of Nipped-B-like protein (NIPBL) from Homo sapiens (Human).